A 492-amino-acid polypeptide reads, in one-letter code: Glutamyl-tRNA(Gln) amidotransferase subunit A (492 aa).

Residues K79 and S154 each act as charge relay system in the active site. S178 functions as the Acyl-ester intermediate in the catalytic mechanism.

The protein belongs to the amidase family. GatA subfamily. As to quaternary structure, heterotrimer of A, B and C subunits.

The enzyme catalyses L-glutamyl-tRNA(Gln) + L-glutamine + ATP + H2O = L-glutaminyl-tRNA(Gln) + L-glutamate + ADP + phosphate + H(+). Functionally, allows the formation of correctly charged Gln-tRNA(Gln) through the transamidation of misacylated Glu-tRNA(Gln) in organisms which lack glutaminyl-tRNA synthetase. The reaction takes place in the presence of glutamine and ATP through an activated gamma-phospho-Glu-tRNA(Gln). In Acinetobacter baumannii (strain ACICU), this protein is Glutamyl-tRNA(Gln) amidotransferase subunit A.